Reading from the N-terminus, the 395-residue chain is Vacuolar protease A (395 aa).

Residues 1 to 18 (MKGSLLLAGATLLGCTSA) form the signal peptide. Positions 19–72 (KLHSLKLKKVSLKEQLEHADIDVQIKSLGQKYMGIRPGQHEQQMFKEQTPIEAE) are cleaved as a propeptide — activation peptide. Residues 87-392 (YFSEISIGTP…DLGKGTVGLA (306 aa)) enclose the Peptidase A1 domain. D105 is a catalytic residue. A disulfide bond links C118 and C123. The N-linked (GlcNAc...) asparagine glycan is linked to N140. D289 is an active-site residue. Residues C318 and C351 are joined by a disulfide bond. N335 is a glycosylation site (N-linked (GlcNAc...) asparagine).

The protein belongs to the peptidase A1 family.

Its subcellular location is the vacuole lumen. The protein resides in the secreted. The enzyme catalyses Hydrolysis of proteins with broad specificity for peptide bonds. Cleaves -Leu-Leu-|-Val-Tyr- bond in a synthetic substrate. Does not act on esters of Tyr or Arg.. Functionally, vacuolar aspartic endopeptidase which is probably also secreted and contributes to virulence. The protein is Vacuolar protease A (PEP2) of Arthroderma otae (strain ATCC MYA-4605 / CBS 113480) (Microsporum canis).